The following is a 299-amino-acid chain: Hairy/enhancer-of-split related with YRPW motif protein 1 (299 aa).

The segment at 1-53 (MKRAHPDYSSSDSELDETIEVEKESADENGNLSSALCSMSPTTSSQVLARKRR) is disordered. Over residues 28–47 (ENGNLSSALCSMSPTTSSQV) the composition is skewed to polar residues. The transcriptional repression and interaction with NCOR1 and SIN3A stretch occupies residues 48 to 117 (LARKRRRGII…GGKGYFDAHA (70 aa)). In terms of domain architecture, bHLH spans 49 to 104 (ARKRRRGIIEKRRRDRINNSLSELRRLVPSAFEKQGSAKLEKAEILQMTVDHLKML). Positions 122–158 (YRSLGFRECLAEVARYLSIIEGLDASDPLLVRLVSHL) constitute an Orange domain. The disordered stretch occupies residues 194 to 234 (LLLPQNGHGNAGTAASPTEPHHQGRLASAHPEAPALRAPPS). The YRPW motif signature appears at 289–292 (YRPW).

This sequence belongs to the HEY family. In terms of assembly, may self-associate. Interacts with HES1, NCOR1 and SIN3A. Interacts with GATA4, GATA6 and HDAC1 and HEYL. Interacts with CCDC89/BOIP. Expressed in somitic mesoderm, brain, central nervous system, kidney, heart, nasal epithelium, limbs, lung, muscle, ovary and testis.

The protein resides in the nucleus. Functionally, transcriptional repressor which binds preferentially to the canonical E box sequence 5'-CACGTG-3'. Downstream effector of Notch signaling required for cardiovascular development. Specifically required for the Notch-induced endocardial epithelial to mesenchymal transition, which is itself criticial for cardiac valve and septum development. May be required in conjunction with HEY2 to specify arterial cell fate or identity. Promotes maintenance of neuronal precursor cells and glial versus neuronal fate specification. Represses transcription by the cardiac transcriptional activators GATA4 and GATA6 and by the neuronal bHLH factors ASCL1/MASH1 and NEUROD4/MATH3. This chain is Hairy/enhancer-of-split related with YRPW motif protein 1 (Hey1), found in Mus musculus (Mouse).